The chain runs to 640 residues: Threonine--tRNA ligase (640 aa).

The TGS domain occupies 1-61; that stretch reads MPTITLPDGS…ACDADVTIIT (61 aa). A catalytic region spans residues 243 to 534; the sequence is DHRKIGKALD…LIEQYAGNMP (292 aa). 3 residues coordinate Zn(2+): Cys334, His385, and His511.

This sequence belongs to the class-II aminoacyl-tRNA synthetase family. In terms of assembly, homodimer. Requires Zn(2+) as cofactor.

It is found in the cytoplasm. It catalyses the reaction tRNA(Thr) + L-threonine + ATP = L-threonyl-tRNA(Thr) + AMP + diphosphate + H(+). Its function is as follows. Catalyzes the attachment of threonine to tRNA(Thr) in a two-step reaction: L-threonine is first activated by ATP to form Thr-AMP and then transferred to the acceptor end of tRNA(Thr). Also edits incorrectly charged L-seryl-tRNA(Thr). This Dichelobacter nodosus (strain VCS1703A) protein is Threonine--tRNA ligase.